The sequence spans 813 residues: Hyaluronate lyase HylB (813 aa).

Positions 1–32 (MFGTPSRRTFLTASALSAMALAASPTVTDAIA) form a signal peptide, tat-type signal. Catalysis depends on residues Asn-222, His-272, and Tyr-281.

Belongs to the polysaccharide lyase 8 family. Predicted to be exported by the Tat system. The position of the signal peptide cleavage has not been experimentally proven.

Its subcellular location is the secreted. It carries out the reaction [hyaluronan](n) = n 3-(4-deoxy-beta-D-gluc-4-enuronosyl)-N-acetyl-D-glucosamine + H2O. Functionally, degrades hyaluronic acid (HA) exclusively into HA disaccharides (HA-2). Produced HA-2s confer anti-inflammatory properties leading to reduced immunopathology in the mouse model of acne. In Cutibacterium acnes (strain DSM 16379 / KPA171202) (Propionibacterium acnes), this protein is Hyaluronate lyase HylB.